Here is a 579-residue protein sequence, read N- to C-terminus: 3-hydroxy-3-methylglutaryl-coenzyme A reductase (579 aa).

The tract at residues Met-1–Ser-22 is disordered. A run of 2 helical transmembrane segments spans residues Leu-36–Leu-56 and Ala-80–Val-100. The tract at residues Gln-101 to Asp-153 is linker. The interval Asp-154–Val-579 is catalytic. Glu-247 acts as the Charge relay system in catalysis. N-linked (GlcNAc...) asparagine glycosylation is present at Asn-311. Residues Lys-379 and Asp-455 each act as charge relay system in the active site. Residues Leu-524–Leu-544 form a helical membrane-spanning segment. The Proton donor role is filled by His-553. Positions Lys-555–Val-579 are disordered. Asn-557 is a glycosylation site (N-linked (GlcNAc...) asparagine). Basic and acidic residues predominate over residues Glu-570–Val-579.

The protein belongs to the HMG-CoA reductase family.

It is found in the endoplasmic reticulum membrane. It catalyses the reaction (R)-mevalonate + 2 NADP(+) + CoA = (3S)-3-hydroxy-3-methylglutaryl-CoA + 2 NADPH + 2 H(+). The protein operates within metabolic intermediate biosynthesis; (R)-mevalonate biosynthesis; (R)-mevalonate from acetyl-CoA: step 3/3. Functionally, catalyzes the synthesis of mevalonate. The specific precursor of all isoprenoid compounds present in plants. This Zea mays (Maize) protein is 3-hydroxy-3-methylglutaryl-coenzyme A reductase (HMGR).